A 1400-amino-acid polypeptide reads, in one-letter code: Tensin-2 (1400 aa).

The segment at 31 to 79 adopts a Phorbol-ester/DAG-type zinc-finger fold; the sequence is PHSFREKVFRKKTPVCAVCKVTIDGTGVSCRVCKVATHRKCEAKVTSSC. Thr91 is subject to Phosphothreonine. 2 positions are modified to phosphoserine: Ser118 and Ser120. One can recognise a Phosphatase tensin-type domain in the interval 122–294; it reads DPLMERRWDL…SYFSGLLSGS (173 aa). The active-site Phosphocysteine intermediate is the Cys231. Residues 299–425 enclose the C2 tensin-type domain; that stretch reads SSPLFLHYVF…ASVEFVFSSS (127 aa). Residues 425–444 form a disordered region; sequence SPEKVKGNTPRNDPSVSVDY. Positions 433–444 are enriched in polar residues; that stretch reads TPRNDPSVSVDY. The residue at position 455 (Ser455) is a Phosphoserine. A Phosphotyrosine modification is found at Tyr456. Position 466 is a phosphoserine (Ser466). The residue at position 474 (Thr474) is a Phosphothreonine. Residue Ser481 is modified to Phosphoserine. At Tyr483 the chain carries Phosphotyrosine. Residues 488 to 536 are disordered; it reads RVPRQTPPAPSPELPPPPMLSVSSDSGHSSTLTTEHTAESPGRPPPTAA. Residues 492 to 506 show a composition bias toward pro residues; sequence QTPPAPSPELPPPPM. Arg555 carries the omega-N-methylarginine modification. The tract at residues 809 to 1114 is disordered; that stretch reads CGSPSEGRGY…DVTQPPEHPL (306 aa). Ser820, Ser825, Ser830, Ser832, and Ser835 each carry phosphoserine. Composition is skewed to polar residues over residues 898–917 and 929–940; these read CSAS…SSPV and TRSPSLAPTQRL. Phosphothreonine is present on Thr909. 3 positions are modified to phosphoserine: Ser931, Ser941, and Ser972. Position 977 is a phosphothreonine (Thr977). Residues Ser991 and Ser1003 each carry the phosphoserine modification. Pro residues predominate over residues 1046–1056; the sequence is PEPPQSSPTPA. The span at 1082–1098 shows a compositional bias: polar residues; the sequence is SGQQPSPPARSTNQHVT. The residue at position 1087 (Ser1087) is a Phosphoserine. An SH2 domain is found at 1131–1238; the sequence is WYKPHLSRDQ…SLPCCLRIPS (108 aa). Thr1173 is subject to Phosphothreonine. Ser1238 is modified (phosphoserine). The PTB domain maps to 1266-1399; it reads ACSVLYLTSV…FITKVLLGQR (134 aa).

This sequence belongs to the PTEN phosphatase protein family. Interacts with AXL. Interacts with SYK; leading to its phosphorylation. Interacts with SQSTM1 (via PB1 domain); the interaction leads to sequestration of TNS2 in cytoplasmic aggregates with SQSTM1 and promotes TNS2 ubiquitination and proteasomal degradation. In terms of processing, ubiquitinated following sequestration in cytoplasmic aggregates with SQSTM1, leading to proteasomal degradation. In terms of tissue distribution, in the adult kidney, expressed mainly in glomeruli (at protein level). In the newborn kidney, localizes on the basal surface of podocytes along the glomerular basement membrane and not in endothelial cells. Low expression levels in anabolic skeletal muscles.

It is found in the cell junction. It localises to the focal adhesion. The protein resides in the cell membrane. Its subcellular location is the cytoplasm. The catalysed reaction is O-phospho-L-tyrosyl-[protein] + H2O = L-tyrosyl-[protein] + phosphate. In terms of biological role, tyrosine-protein phosphatase which regulates cell motility, proliferation and muscle-response to insulin. Phosphatase activity is mediated by binding to phosphatidylinositol-3,4,5-triphosphate (PtdIns(3,4,5)P3) via the SH2 domain. In muscles and under catabolic conditions, dephosphorylates IRS1 leading to its degradation and muscle atrophy. Negatively regulates PI3K-AKT pathway activation. Dephosphorylates nephrin NPHS1 in podocytes which affects mTORC1 complex activity. Under normal glucose conditions, NPHS1 outcompetes IRS1 for binding to phosphatidylinositol 3-kinase (PI3K) which balances mTORC1 activity but high glucose conditions lead to up-regulation of TNS2, increased NPHS1 dephosphorylation and activation of mTORC1, contributing to podocyte hypertrophy and proteinuria. Required for correct podocyte morphology, podocyte-glomerular basement membrane interaction and integrity of the glomerular filtration barrier. Enhances RHOA activation in the presence of DLC1. Plays a role in promoting DLC1-dependent remodeling of the extracellular matrix. This chain is Tensin-2 (Tns2), found in Mus musculus (Mouse).